Reading from the N-terminus, the 339-residue chain is Glucokinase (339 aa).

16 to 21 (GDIGGT) contacts ATP.

Belongs to the bacterial glucokinase family.

The protein resides in the cytoplasm. It carries out the reaction D-glucose + ATP = D-glucose 6-phosphate + ADP + H(+). This chain is Glucokinase, found in Sinorhizobium medicae (strain WSM419) (Ensifer medicae).